The chain runs to 403 residues: RILP-like protein 1 (403 aa).

Ser7 is modified (phosphoserine). One can recognise an RH1 domain in the interval 10-97; the sequence is AAESALEKNV…RLERMDRIEK (88 aa). The residue at position 47 (Cys47) is an S-nitrosocysteine. Positions 76 to 258 form a coiled coil; the sequence is ELDELRLELD…KLRERLQGEH (183 aa). Disordered regions lie at residues 254–275, 327–352, and 384–403; these read LQGE…GEES, EMEE…PESG, and ANTH…LQHL. Ser259 is subject to Phosphoserine. The span at 262–275 shows a compositional bias: acidic residues; the sequence is GEEEPETEPVGEES. Residues 291–356 enclose the RH2 domain; sequence RPRFTLQELR…PQPESGIKRL (66 aa). Over residues 394–403 the composition is skewed to polar residues; it reads EQGQEALQHL.

It belongs to the RILPL family. In terms of assembly, interacts (when S-nitrosylated) with GAPDH. Interacts with RAB8A; interaction is dependent on the phosphorylation of 'Thr-72' of RAB8A. Interacts with RAB10 and RAB12; the interaction is dependent on the phosphorylation of 'Thr-73' of RAB10, and 'Ser-105' of RAB12. S-nitrosylation is required for the interaction with GAPDH. As to expression, widely expressed. Expressed at lower level in liver and kidney.

The protein localises to the cytoplasm. It localises to the cytosol. It is found in the cytoskeleton. Its subcellular location is the microtubule organizing center. The protein resides in the centrosome. The protein localises to the centriole. It localises to the cilium basal body. Its function is as follows. Plays a role in the regulation of cell shape and polarity. Plays a role in cellular protein transport, including protein transport away from primary cilia. Neuroprotective protein, which acts by sequestring GAPDH in the cytosol and prevent the apoptotic function of GAPDH in the nucleus. Competes with SIAH1 for binding GAPDH. Does not regulate lysosomal morphology and distribution. Binds to RAB10 following LRRK2-mediated RAB10 phosphorylation which leads to inhibition of ciliogenesis. This Homo sapiens (Human) protein is RILP-like protein 1 (RILPL1).